The chain runs to 559 residues: DPMLQDSQGFNALHLATHSSNAMLVLYLLMAGEMPVDTADTLGHTSLMWAAYQGDSLSVQILLKHGARVDTKDREGFTPLHWAVVKGNRECLSKILMAGADIKAGDKSGKTPVDMIKELKGTMIWDKALSDAKLSSDGQTRRTPFDKLMVLFPWYIALPLAVAQFLFGHIGAIKFLLRTRTPNDMLQTPYYTAVFQSTAFWVGFVWLRYLLGNTSHLLWMNIAFFVGYTSALYFFYGAVMADPGWTKANSSYESQREAVVQMADRGLLDARHFCVSCIAQRPLRSKHCKFCNRCVAKFDHHCPWIYNCIGAKNHRAFLIFLALFLSSVPIYAYLSFEYLHVLSPSYVPVSSDPCLLGDTLCGYFQYDAFTTTLAFWSLFQMTWPGLLFLVQLYQVGQAKTTNEAMNFQRHSYLGKSMTIRQRILRSLTEIDSEMAGAGHPLQEESINLLEANGTATNDEDEVTLFAQEESKPVGFGDHEGHNHGARRAGGGGMWNLLVGTARRRRQQGEDRDVNPFDFGLWQNCVGFWSDGTQGPMRGVNWYSFYEAEARGGAATSRRM.

ANK repeat units lie at residues 8-38, 42-71, and 75-104; these read QGFNALHLATHSSNAMLVLYLLMAGEMPVDT, LGHTSLMWAAYQGDSLSVQILLKHGARVDT, and EGFTPLHWAVVKGNRECLSKILMAGADIKA. The next 3 helical transmembrane spans lie at 148–168, 192–212, and 217–237; these read LMVLFPWYIALPLAVAQFLFG, TAVFQSTAFWVGFVWLRYLLG, and LLWMNIAFFVGYTSALYFFYG. In terms of domain architecture, DHHC spans 272 to 322; it reads HFCVSCIAQRPLRSKHCKFCNRCVAKFDHHCPWIYNCIGAKNHRAFLIFLA. The active-site S-palmitoyl cysteine intermediate is the Cys-302. 2 helical membrane passes run 316 to 336 and 373 to 393; these read AFLIFLALFLSSVPIYAYLSF and LAFWSLFQMTWPGLLFLVQLY.

The protein belongs to the DHHC palmitoyltransferase family. AKR/ZDHHC17 subfamily.

Its subcellular location is the early endosome membrane. It localises to the golgi apparatus membrane. The enzyme catalyses L-cysteinyl-[protein] + hexadecanoyl-CoA = S-hexadecanoyl-L-cysteinyl-[protein] + CoA. Functionally, palmitoyltransferase specific for casein kinase 1. The sequence is that of Palmitoyltransferase AKR1 from Mortierella alpina (Oleaginous fungus).